The following is a 415-amino-acid chain: Camphor 5-monooxygenase (415 aa).

Cysteine 358 contributes to the heme binding site.

Belongs to the cytochrome P450 family. It depends on heme as a cofactor.

The protein localises to the cytoplasm. The enzyme catalyses 2 reduced [2Fe-2S]-[putidaredoxin] + (1R,4R)-camphor + O2 + 2 H(+) = (1R,4R,5R)-5-hydroxycamphor + 2 oxidized [2Fe-2S]-[putidaredoxin] + H2O. It functions in the pathway terpene metabolism; (R)-camphor degradation. Involved in a camphor oxidation system. The polypeptide is Camphor 5-monooxygenase (camC) (Pseudomonas putida (Arthrobacter siderocapsulatus)).